Consider the following 556-residue polypeptide: Calcium-dependent protein kinase 5 (556 aa).

Residues 1–40 are disordered; the sequence is MGNSCRGSFKDKLDEGDNNKPEDYSKTSTTNLSSNSDHSP. A lipid anchor (N-myristoyl glycine) is attached at glycine 2. Over residues 8-25 the composition is skewed to basic and acidic residues; that stretch reads SFKDKLDEGDNNKPEDYS. A compositionally biased stretch (low complexity) spans 26–39; that stretch reads KTSTTNLSSNSDHS. Positions 97 to 355 constitute a Protein kinase domain; the sequence is YTLSRKLGQG…AHEVLRHPWI (259 aa). Residues 103–111 and lysine 126 contribute to the ATP site; that span reads LGQGQFGTT. Aspartate 221 acts as the Proton acceptor in catalysis. Serine 261 bears the Phosphoserine mark. The segment at 361–391 is autoinhibitory domain; the sequence is APDRALDPAVLSRLKQFSAMNKLKKMALKVI. 4 consecutive EF-hand domains span residues 398–433, 434–469, 470–505, and 509–539; these read EEIAGLREMFQAMDTDNSGAITFDELKAGLRKYGST, LKDTEIHDLMDAADVDNSGTIDYSEFIAATIHLNKL, EREEHLVAAFQYFDKDGSGFITIDELQQACVEHGMA, and LEDIIKEVDQNNDGKIDYGEFVEMMQKGNAG. The Ca(2+) site is built by aspartate 411, aspartate 413, serine 415, glutamate 422, aspartate 447, aspartate 449, serine 451, threonine 453, glutamate 458, aspartate 483, aspartate 485, serine 487, glutamate 494, aspartate 517, asparagine 519, aspartate 521, lysine 523, and glutamate 528.

It belongs to the protein kinase superfamily. Ser/Thr protein kinase family. CDPK subfamily.

It is found in the membrane. The enzyme catalyses L-seryl-[protein] + ATP = O-phospho-L-seryl-[protein] + ADP + H(+). The catalysed reaction is L-threonyl-[protein] + ATP = O-phospho-L-threonyl-[protein] + ADP + H(+). Activated by calcium. Autophosphorylation may play an important role in the regulation of the kinase activity. In terms of biological role, may play a role in signal transduction pathways that involve calcium as a second messenger. The sequence is that of Calcium-dependent protein kinase 5 (CPK5) from Arabidopsis thaliana (Mouse-ear cress).